We begin with the raw amino-acid sequence, 218 residues long: Ribose-5-phosphate isomerase A (218 aa).

Substrate is bound by residues 28-31, 81-84, and 94-97; these read TGST, DGAD, and KGGG. E103 serves as the catalytic Proton acceptor. K121 lines the substrate pocket.

The protein belongs to the ribose 5-phosphate isomerase family. Homodimer.

It catalyses the reaction aldehydo-D-ribose 5-phosphate = D-ribulose 5-phosphate. The protein operates within carbohydrate degradation; pentose phosphate pathway; D-ribose 5-phosphate from D-ribulose 5-phosphate (non-oxidative stage): step 1/1. In terms of biological role, catalyzes the reversible conversion of ribose-5-phosphate to ribulose 5-phosphate. This chain is Ribose-5-phosphate isomerase A, found in Vibrio atlanticus (strain LGP32) (Vibrio splendidus (strain Mel32)).